A 592-amino-acid polypeptide reads, in one-letter code: Keratin, type II cytoskeletal 5 (592 aa).

The span at 1-18 (MSRQSSVSFRSGGSRSFS) shows a compositional bias: low complexity. Residues 1–20 (MSRQSSVSFRSGGSRSFSTA) form a disordered region. The interval 1–169 (MSRQSSVSFR…DPSIQRVRTE (169 aa)) is head. Phosphoserine is present on residues Ser-5, Ser-8, Ser-16, and Ser-21. At Thr-24 the chain carries Phosphothreonine; by CDK1. A phosphoserine mark is found at Ser-26, Ser-36, Ser-50, Ser-64, Ser-71, Ser-75, and Ser-82. Phosphothreonine; by CDK1 is present on Thr-153. Thr-168 is subject to Phosphothreonine; by AURKB. Residues 170 to 205 (EREQIKTLNNKFASFIDKVRFLEQQNKVLDTKWTLL) form a coil 1A region. The IF rod domain occupies 170–483 (EREQIKTLNN…KLLEGEECRL (314 aa)). The segment at 206–224 (QEQGTKTVRQNLEPLFEQY) is linker 1. Positions 225–317 (INNLRRQLDS…FFDAELSQMQ (93 aa)) are coil 1B. Residues 318–340 (THVSDTSVVLSMDNNRNLDLDSI) form a linker 12 region. The segment at 341 to 479 (IAEVKAQYEE…ATYRKLLEGE (139 aa)) is coil 2. The interval 480-592 (ECRLSGEGVG…TSSSRKSFKS (113 aa)) is tail. Positions 568–592 (GSGGGSSSSVKFVSTTSSSRKSFKS) are disordered. Low complexity predominate over residues 574–592 (SSSVKFVSTTSSSRKSFKS).

This sequence belongs to the intermediate filament family. Heterodimer of a type I and a type II keratin. Heterodimer with type I keratin KRT25 leading to the formation of keratin intermediate filament (KIF) network. Forms a heterodimer (via 2B domains) with KRT14 (via 2B domains). Interacts with TCHP. Interacts with EPPK1. Interacts with AMELX. Interacts with PKP1 (via N-terminus) and PKP2. In terms of processing, phosphorylated by CDK1, AURKB and Rho-kinase, phosphorylation is regulated by the cell cycle. Thr-24 phosphorylation, mediated by CDK1, peaks during prometaphase or metaphase cells with phosphorylated filamentous structures evident throughout the cytoplasm during early mitosis. CDK1 phosphorylates Thr-24 in mitotic cells at the site of injury. O-glycosylated.

Its subcellular location is the cytoplasm. Required for the formation of keratin intermediate filaments in the basal epidermis and maintenance of the skin barrier in response to mechanical stress. Regulates the recruitment of Langerhans cells to the epidermis, potentially by modulation of the abundance of macrophage chemotactic cytokines, macrophage inflammatory cytokines and CTNND1 localization in keratinocytes. This Pan troglodytes (Chimpanzee) protein is Keratin, type II cytoskeletal 5 (KRT5).